Reading from the N-terminus, the 154-residue chain is 17.6 kDa class I heat shock protein (154 aa).

One can recognise a sHSP domain in the interval 40-154 (ETSAFANTRI…PDVKSIEISG (115 aa)).

This sequence belongs to the small heat shock protein (HSP20) family. In terms of assembly, forms oligomeric structures.

Its subcellular location is the cytoplasm. The polypeptide is 17.6 kDa class I heat shock protein (Solanum peruvianum (Peruvian tomato)).